A 208-amino-acid chain; its full sequence is Peroxiredoxin (208 aa).

Positions 2–156 constitute a Thioredoxin domain; sequence PLLGDDFPQL…IVRAVKALQT (155 aa). Cys44 serves as the catalytic Cysteine sulfenic acid (-SOH) intermediate. Arg119 is a substrate binding site.

Belongs to the peroxiredoxin family. Prx6 subfamily. Homodecamer. Pentamer of dimers that assemble into a ring structure.

The protein resides in the cytoplasm. The enzyme catalyses a hydroperoxide + [thioredoxin]-dithiol = an alcohol + [thioredoxin]-disulfide + H2O. Thiol-specific peroxidase that catalyzes the reduction of hydrogen peroxide and organic hydroperoxides to water and alcohols, respectively. Plays a role in cell protection against oxidative stress by detoxifying peroxides. This is Peroxiredoxin from Treponema denticola (strain ATCC 35405 / DSM 14222 / CIP 103919 / JCM 8153 / KCTC 15104).